We begin with the raw amino-acid sequence, 251 residues long: Aliphatic sulfonates import ATP-binding protein SsuB (251 aa).

The ABC transporter domain maps to 3 to 231 (VSINEVSKYF…PRNKTSQSFQ (229 aa)). ATP is bound at residue 39-46 (GPSGCGKS).

Belongs to the ABC transporter superfamily. Aliphatic sulfonates importer (TC 3.A.1.17.2) family. As to quaternary structure, the complex is composed of two ATP-binding proteins (SsuB), two transmembrane proteins (SsuC) and a solute-binding protein (SsuA).

It localises to the cell membrane. It carries out the reaction ATP + H2O + aliphatic sulfonate-[sulfonate-binding protein]Side 1 = ADP + phosphate + aliphatic sulfonateSide 2 + [sulfonate-binding protein]Side 1.. Functionally, part of the ABC transporter complex SsuABC involved in aliphatic sulfonates import. Responsible for energy coupling to the transport system. This chain is Aliphatic sulfonates import ATP-binding protein SsuB, found in Bacillus anthracis.